A 310-amino-acid polypeptide reads, in one-letter code: tRNA-cytidine(32) 2-sulfurtransferase (310 aa).

Positions 47-52 (SGGKDS) match the PP-loop motif motif. [4Fe-4S] cluster is bound by residues C122, C125, and C213.

Belongs to the TtcA family. Homodimer. Mg(2+) serves as cofactor. [4Fe-4S] cluster is required as a cofactor.

It localises to the cytoplasm. The enzyme catalyses cytidine(32) in tRNA + S-sulfanyl-L-cysteinyl-[cysteine desulfurase] + AH2 + ATP = 2-thiocytidine(32) in tRNA + L-cysteinyl-[cysteine desulfurase] + A + AMP + diphosphate + H(+). It participates in tRNA modification. In terms of biological role, catalyzes the ATP-dependent 2-thiolation of cytidine in position 32 of tRNA, to form 2-thiocytidine (s(2)C32). The sulfur atoms are provided by the cysteine/cysteine desulfurase (IscS) system. This Haemophilus influenzae (strain 86-028NP) protein is tRNA-cytidine(32) 2-sulfurtransferase.